A 249-amino-acid chain; its full sequence is Homeobox protein TGIF2LX (249 aa).

Positions Met-1–Pro-27 are enriched in basic and acidic residues. 2 disordered regions span residues Met-1 to Arg-60 and Gln-121 to Ser-215. Over residues Ala-28–Asp-46 the composition is skewed to polar residues. The homeobox; TALE-type DNA-binding region spans Glu-55 to Asp-118. Positions Asp-159 to Gly-172 are enriched in polar residues. The segment covering Val-202 to Ser-215 has biased composition (low complexity).

The protein belongs to the TALE/TGIF homeobox family.

It is found in the nucleus. In terms of biological role, may have a transcription role in testis. This chain is Homeobox protein TGIF2LX (TGIF2LX), found in Miopithecus talapoin (Angolan talapoin).